The following is a 119-amino-acid chain: Protein Wnt-4 (119 aa).

A lipid anchor (O-palmitoleoyl serine; by PORCN) is attached at Ser-1. 2 cysteine pairs are disulfide-bonded: Cys-69/Cys-100 and Cys-85/Cys-95. An N-linked (GlcNAc...) asparagine glycan is attached at Asn-86.

Belongs to the Wnt family. In terms of processing, palmitoleoylation is required for efficient binding to frizzled receptors. Depalmitoleoylation leads to Wnt signaling pathway inhibition.

It is found in the secreted. The protein localises to the extracellular space. It localises to the extracellular matrix. In terms of biological role, ligand for members of the frizzled family of seven transmembrane receptors. Plays an important role in embryonic development. The chain is Protein Wnt-4 (WNT4) from Meleagris gallopavo (Wild turkey).